Here is a 385-residue protein sequence, read N- to C-terminus: Putative glutamate--cysteine ligase 2 (385 aa).

This sequence belongs to the glutamate--cysteine ligase type 2 family. YbdK subfamily.

The enzyme catalyses L-cysteine + L-glutamate + ATP = gamma-L-glutamyl-L-cysteine + ADP + phosphate + H(+). In terms of biological role, ATP-dependent carboxylate-amine ligase which exhibits weak glutamate--cysteine ligase activity. The protein is Putative glutamate--cysteine ligase 2 of Solibacter usitatus (strain Ellin6076).